The following is an 87-amino-acid chain: MSILSALTSISNPMKSTKSSVANGGGRLSMGTNSVACGSCGGGNSSSGTINNADGSQTTYYSYTSPVYTYNYSYSYSSSGSSSCGCH.

The segment covering 1–22 (MSILSALTSISNPMKSTKSSVA) has biased composition (polar residues). Residues 1-23 (MSILSALTSISNPMKSTKSSVAN) form a disordered region.

It belongs to the hssA/B family.

The protein is HssA/B-like protein 7 (hssl7) of Dictyostelium discoideum (Social amoeba).